We begin with the raw amino-acid sequence, 92 residues long: YcgL domain-containing protein HS_0805 (92 aa).

One can recognise a YcgL domain in the interval Met1–Arg85.

This chain is YcgL domain-containing protein HS_0805, found in Histophilus somni (strain 129Pt) (Haemophilus somnus).